The sequence spans 382 residues: 2-heptyl-3-hydroxy-4(1H)-quinolone synthase (382 aa).

It belongs to the 3-hydroxybenzoate 6-hydroxylase family.

It catalyses the reaction 2-heptyl-4(1H)-quinolone + NADH + O2 + H(+) = 2-heptyl-3-hydroxy-4(1H)-quinolone + NAD(+) + H2O. In terms of biological role, involved in the terminal step of the biosynthesis of quinolone which in addition to serve as a potent signal for quorum sensing, chelates iron and promotes the formation of membrane vesicles (MVs). Catalyzes the hydroxylation of 2-heptyl-4-quinolone (C7-HHQ) to yield 2-heptyl-3-hydroxy-4-quinolone (PQS). PqsH is also able to hydroxylate HHQ analogs having alkyl side-chain lengths of 3 (C3-HHQ), 5 (C5-HHQ) and 9 (C9-HHQ) carbons, however catalytic efficiencies are significantly reduced for substrates with alkyl side-chain lengths below 7 carbons. This is 2-heptyl-3-hydroxy-4(1H)-quinolone synthase (pqsH) from Pseudomonas aeruginosa (strain UCBPP-PA14).